The primary structure comprises 237 residues: MKLILTLLVSGLCALAAPAAKRDGVEDYAIGIDKRNSVEDYAIGIDKRNSVEDYAIGIDKRNSVEDYAIGIDKRNSVEDYAIGIDKRNTVEDYAIGIDKRNSVEDYAIGIDKRNTVEDYAIGIDKRNSVEDYAIGIDKRNSVEDYAIGIDKRGGSVEDYAIGIDKRNSVEDYAIGIDKRNSVEDYAIGIDKRGSVEDYAIGIDKKRGTVEDYAIGIDKRGGSVEDYAIGIDKRHGGH.

The first 19 residues, 1–19, serve as a signal peptide directing secretion; that stretch reads MKLILTLLVSGLCALAAPA. 2 consecutive propeptides follow at residues 20–22 and 234–237; these read AKR and HGGH.

UstA is processed by the subtilisin-like endoprotease kex2 that is outside the ustiloxin B gene cluster, at the C-terminal side of Arg-Lys, after transfer to Golgi apparatus through the endoplasmic reticulum (ER). Cleavage by kex2 generates 16 peptides YAIG-I to YAIG-XVI. To process the precursor peptide further, at least two peptidases are necessary to cleave the N-terminal and C-terminal sides of the Tyr-Ala-Ile-Gly core peptide which serves as backbone for the synthesis of ustiloxin B, through cyclization and modification of the tyrosine. One of the two peptidases must be the serine peptidase ustP; and the other pepdidase is probably ustH. Macrocyclization of the core peptide derived from ustA requires the tyrosinase ustQ, as well as the homologous oxidases ustYa and ustYb, and leads to the production of the first cyclization product N-desmethylustiloxin F. For the formation of N-desmethylustiloxin F, three oxidation steps are required, hydroxylation at the benzylic position, hydroxylation at either the aromatic ring of Tyr or beta-position of Ile, and oxidative cyclization. UstQ may catalyze the oxidation of a phenol moiety, whereas the ustYa and ustYb are most likely responsible for the remaining two-step oxidations. N-desmethylustiloxin F is then methylated by ustM to yield ustiloxin F which in turn substrate of the cytochrome P450 monooxygenase ustC which catalyzes the formation of S-deoxyustiloxin H. The flavoprotein monooxygenases ustF1 and ustF2 then participate in the modification of the side chain of S-deoxyustiloxin H, leading to the synthesis of an oxime intermediate, via ustiloxin H. Finally, carboxylative dehydration performed by the cysteine desulfurase-like protein ustD yields ustiloxin B.

It participates in mycotoxin biosynthesis. Its function is as follows. Ribosomally synthesized cyclic peptide ustiloxin B precursor: Part of the gene cluster that mediates the biosynthesis of the secondary metabolite ustiloxin B, an antimitotic tetrapeptide. The ustA translated product contains a 16-fold repeated peptide embedding the tetrapeptide Tyr-Ala-Ile-Gly, that is converted into the cyclic moiety of ustiloxin B. This Aspergillus flavus (strain ATCC 200026 / FGSC A1120 / IAM 13836 / NRRL 3357 / JCM 12722 / SRRC 167) protein is Ribosomally synthesized cyclic peptide ustiloxin B precursosr.